The sequence spans 236 residues: Heme oxygenase (236 aa).

Position 17 (histidine 17) interacts with heme b.

The protein belongs to the heme oxygenase family.

The protein resides in the plastid. It localises to the chloroplast. The enzyme catalyses heme b + 3 reduced [NADPH--hemoprotein reductase] + 3 O2 = biliverdin IXalpha + CO + Fe(2+) + 3 oxidized [NADPH--hemoprotein reductase] + 3 H2O + H(+). In terms of biological role, catalyzes the opening of the heme ring with the release of iron. Key enzyme in the synthesis of the chromophoric part of the photosynthetic antennae. The polypeptide is Heme oxygenase (pbsA) (Porphyra purpurea (Red seaweed)).